Reading from the N-terminus, the 53-residue chain is Rubredoxin (53 aa).

Residues 1 to 53 (MQKYVCDICGYVYDPAVGDPDNGVAPGTAFADLPEDWVCPECGVSKDEFSPEA) form the Rubredoxin-like domain. Fe cation-binding residues include cysteine 6, cysteine 9, cysteine 39, and cysteine 42.

The protein belongs to the rubredoxin family. Requires Fe(3+) as cofactor.

Functionally, rubredoxin is a small nonheme, iron protein lacking acid-labile sulfide. Its single Fe, chelated to 4 Cys, functions as an electron acceptor and may also stabilize the conformation of the molecule. The chain is Rubredoxin from Butyribacterium methylotrophicum.